The chain runs to 256 residues: MFKKLIKRNKTKISHNDDLDLHNLPEHVAIIMDGNGRWAKKRKMPRIKGHYEGMQTIKTVTREASDLGIKYLTLYAFSTENWSRPENEVNYIMNLPVNFLKTFLPELIEKNVQIETIGFLDAVPKSTIEAIEHAKEKTKNNTGLKLIFAINYGGRAEIVQSMKSIYDELQRNGQDSKDIDESMINKHLMTHSYPDPELLIRTSGEQRISNFLIWQSSYSEFIFNEKLWPDFDGEEFKNCLKIYQSRQRRFGGLSKE.

The active site involves Asp33. Mg(2+) is bound at residue Asp33. Substrate is bound by residues 34–37 (GNGR), Trp38, Arg46, His50, and 78–80 (STE). The Proton acceptor role is filled by Asn81. Residues Trp82, Arg84, Arg201, and 207–209 (RIS) each bind substrate. Glu220 serves as a coordination point for Mg(2+).

This sequence belongs to the UPP synthase family. As to quaternary structure, homodimer. Mg(2+) serves as cofactor.

Catalyzes the condensation of isopentenyl diphosphate (IPP) with allylic pyrophosphates generating different type of terpenoids. The polypeptide is Isoprenyl transferase (Staphylococcus haemolyticus (strain JCSC1435)).